The chain runs to 143 residues: Hemoglobin subunit alpha-1 (143 aa).

The residue at position 2 (Ser2) is an N-acetylserine. The Globin domain occupies 2-143 (SLTAKDKDTV…LSRALAEKYR (142 aa)). His60 provides a ligand contact to O2. His89 contacts heme b.

This sequence belongs to the globin family. As to quaternary structure, hb1 is a heterotetramer of two alpha-1 chains and two beta-1 chains. In terms of tissue distribution, red blood cells.

In terms of biological role, involved in oxygen transport from gills to the various peripheral tissues. In Anarhichas minor (Arctic spotted wolffish), this protein is Hemoglobin subunit alpha-1 (hba1).